The primary structure comprises 363 residues: Aminomethyltransferase (363 aa).

It belongs to the GcvT family. As to quaternary structure, the glycine cleavage system is composed of four proteins: P, T, L and H.

It carries out the reaction N(6)-[(R)-S(8)-aminomethyldihydrolipoyl]-L-lysyl-[protein] + (6S)-5,6,7,8-tetrahydrofolate = N(6)-[(R)-dihydrolipoyl]-L-lysyl-[protein] + (6R)-5,10-methylene-5,6,7,8-tetrahydrofolate + NH4(+). In terms of biological role, the glycine cleavage system catalyzes the degradation of glycine. In Staphylococcus aureus (strain bovine RF122 / ET3-1), this protein is Aminomethyltransferase.